Reading from the N-terminus, the 209-residue chain is Uracil phosphoribosyltransferase (209 aa).

5-phospho-alpha-D-ribose 1-diphosphate contacts are provided by residues Arg79, Arg104, and 131-139 (DPMLATGNS). Uracil contacts are provided by residues Ile194 and 199 to 201 (GDA). Asp200 lines the 5-phospho-alpha-D-ribose 1-diphosphate pocket.

The protein belongs to the UPRTase family. It depends on Mg(2+) as a cofactor.

It catalyses the reaction UMP + diphosphate = 5-phospho-alpha-D-ribose 1-diphosphate + uracil. Its pathway is pyrimidine metabolism; UMP biosynthesis via salvage pathway; UMP from uracil: step 1/1. With respect to regulation, allosterically activated by GTP. In terms of biological role, catalyzes the conversion of uracil and 5-phospho-alpha-D-ribose 1-diphosphate (PRPP) to UMP and diphosphate. The chain is Uracil phosphoribosyltransferase from Rhizobium etli (strain CIAT 652).